A 649-amino-acid chain; its full sequence is MAADDIDVYGQQEALRRLYERALTTPLPNYAAPTSFELNSAGIASTETYDVIITGGGPAGLTLAVLLAHQGLRAPGAVLCVERRPHPLLAGQADGLTCRTMEMFKELGLYDEVLKVGHEVAEMVMWAELPGTKGIQRVTHQASNENMTPSRVASLVACSQGQIERILELELASYAPGTLKRGAEIIHVEMDARMDTKYPVVVSIRDESGHVTFARCRFLVGADGAHSVVRKCMGISMVGDLSDRVWGVIDFPAETDFPDIRRSGHVHSALGSVMHFPREQSADGDWLTRFYVDMDEANAGNMDSQSAQVGPLTPQHILDRISRTFHPYHLQIKPGTKVEWFSKYSVRRCIASDYIRHDFQGLPRVLLVGDACHTHSPKIGQGMNVSMADSYNLAWKLAHVLLGISSDPRSILESYASERYPVGRQLVEIDKAWNTLEWNTKITGREENYQDTRKDLLRTISGFVSGYGIQYSSGYLIRTARYLNEECSLQAGSRLQHTVMSRFADGLTVDLHDEIVPNGRWKLLVFATQYLSCQKGPFAQAVRSIFENLIPIFLPGCITPIIILPDLVSNVDNGGTSLTRSVDWAVFPSRIKCMAEMKTYVSQRAYDGYRISCHEGAVVLLRPDGVISIIDDLHATEVTSFLKTVVRTL.

FAD contacts are provided by Gln-92, Ile-185, Tyr-344, Asp-370, and Ser-386.

It belongs to the PheA/TfdB FAD monooxygenase family. As to quaternary structure, homodimer. The cofactor is FAD.

It participates in secondary metabolite biosynthesis. Nonribosomal peptide synthetase that mediates the biosynthesis of usterphenyllins and uscandidusins, p-terphenyl derivatives. Within the pathway, ucdD catalyzes the formation of 3,15-dihydroxyterphenyllin via dihydroxylation at C-3 of ring A and C-15 of ring C of the terphenyllin intermediate. The pathway begin with the biosynthesis of 4-hydroxyphenylpyruvate (HPPA) from L-tyrosine, possibly by the aminotransferase ucdG. The nonribosomal peptide synthetase ucdA then condenses two HPPA units to produce atromentin. The key step in this pathway is the reduction and dehydration of atromentin to form a terphenyl triol intermediate, performed by the NAD-dependent dehydrogenase ucdB. Further O-methylation by the methyltransferase ucdC forms terphenyllin carrying two methoxy moieties at C-9 and C-12, and subsequent dihydroxylation at C-3 of ring A and C-15 of ring C by the flavin-dependent oxygenase ucdD leads to 3,15-dihydroxyterphenyllin. Prenylation by ucdE at position C-5 of ring A forms usterphenyllin B, and is followed by a second prenylation at position C-14 of ring C to form usterphenyllin A. The following furan ring formation that leads to uscandidusins A and B was proven to be an unexpected spontaneous non-enzymatic reaction. This Aspergillus ustus protein is Flavin-dependent oxygenase ucdD.